The sequence spans 476 residues: MPPHRSRRRKRASATQLYQTCKASGTCPPDVIPKIEGRTWADQILKWGSTGVFFGGLGIGTGAGSGGRTGYVPIGTRPPVVAEPGPAIRPPVVVDTIGPTDPSVISLLEESAVIDSSIPVPTDTSHGGFNITSSASGPSSTPAVLDISPPTNTIRVASTTSHNPVYSDPFTLRPSLPVEGNGRLLTSHPTIAPHSYEEIPMDTFVVSTDTSNTVTSTPIPGPRPTMRLGLYTRVTQQRPVATTTFLTSPERLVTYDNPAYEGPAEGTLEFEHPTIHEAPDSDFMDIIALHRPVLSARQGTVRVSRIGQRASLQTRSGARIGSRVHFFHDISPITRPSEAIELQPLGSSSTAVSTTASSAINDGLFDVYVDPDIPPSHALPPLRSPTHVSTVSLTSLGSVPAQTANTTVPLSLPTNINVGPDLSPPESPPFISTRPVSPSFDSVMVLGWDFILHPSYMWRKRRKPVPYFFADVRVAA.

Residues 1 to 12 (MPPHRSRRRKRA) carry the Nuclear localization signal motif. Residues C21 and C27 are joined by a disulfide bond. The Nuclear localization signal signature appears at 458-465 (WRKRRKPV).

This sequence belongs to the papillomaviridae L2 protein family. As to quaternary structure, interacts with major capsid protein L1. Interacts with E2; this interaction inhibits E2 transcriptional activity but not the DNA replication function E2. Interacts with host GADD45GIP1. Interacts with host HSPA8; this interaction is required for L2 nuclear translocation. Interacts with host importins KPNB2 and KPNB3. Forms a complex with importin alpha2-beta1 heterodimers via interaction with the importin alpha2 adapter. Interacts with host DYNLT1; this interaction is essential for virus intracellular transport during entry. Interacts (via C-terminus) with host retromer subunits VPS35 and VPS29. Post-translationally, highly phosphorylated.

It is found in the virion. The protein resides in the host nucleus. The protein localises to the host early endosome. Its subcellular location is the host Golgi apparatus. Minor protein of the capsid that localizes along the inner surface of the virion, within the central cavities beneath the L1 pentamers. Plays a role in capsid stabilization through interaction with the major capsid protein L1. Once the virion enters the host cell, L2 escorts the genomic DNA into the nucleus by promoting escape from the endosomal compartments and traffic through the host Golgi network. Mechanistically, the C-terminus of L2 possesses a cell-penetrating peptide that protudes from the host endosome, interacts with host cytoplasmic retromer cargo and thereby mediates the capsid delivery to the host trans-Golgi network. Plays a role through its interaction with host dynein in the intracellular microtubule-dependent transport of viral capsid toward the nucleus. Mediates the viral genome import into the nucleus through binding to host importins. Once within the nucleus, L2 localizes viral genomes to host PML bodies in order to activate early gene expression for establishment of infection. Later on, promotes late gene expression by interacting with the viral E2 protein and by inhibiting its transcriptional activation functions. During virion assembly, encapsidates the genome by direct interaction with the viral DNA. This chain is Minor capsid protein L2, found in Human papillomavirus type 32.